Here is a 207-residue protein sequence, read N- to C-terminus: Sodium/potassium-transporting ATPase subunit beta-1-interacting protein 1 (207 aa).

3 helical membrane passes run 2 to 22, 35 to 55, and 62 to 82; these read GRCS…AAAL, APIL…LGTL, and LILY…IICF. An N-linked (GlcNAc...) asparagine glycan is attached at asparagine 100. A helical membrane pass occupies residues 147 to 167; it reads ALSSALQIFLALFGFVYACYV.

The protein belongs to the NKAIN family. Interacts with atp1b1 C-terminus.

Its subcellular location is the cell membrane. The polypeptide is Sodium/potassium-transporting ATPase subunit beta-1-interacting protein 1 (nkain1) (Xenopus laevis (African clawed frog)).